The sequence spans 134 residues: Large ribosomal subunit protein bL20 (134 aa).

It belongs to the bacterial ribosomal protein bL20 family.

Its function is as follows. Binds directly to 23S ribosomal RNA and is necessary for the in vitro assembly process of the 50S ribosomal subunit. It is not involved in the protein synthesizing functions of that subunit. The chain is Large ribosomal subunit protein bL20 from Sinorhizobium fredii (strain NBRC 101917 / NGR234).